The sequence spans 292 residues: Bifunctional protein FolD (292 aa).

NADP(+)-binding positions include 166 to 168, Ser-191, and Ile-232; that span reads GRS.

It belongs to the tetrahydrofolate dehydrogenase/cyclohydrolase family. In terms of assembly, homodimer.

The catalysed reaction is (6R)-5,10-methylene-5,6,7,8-tetrahydrofolate + NADP(+) = (6R)-5,10-methenyltetrahydrofolate + NADPH. The enzyme catalyses (6R)-5,10-methenyltetrahydrofolate + H2O = (6R)-10-formyltetrahydrofolate + H(+). It functions in the pathway one-carbon metabolism; tetrahydrofolate interconversion. Its function is as follows. Catalyzes the oxidation of 5,10-methylenetetrahydrofolate to 5,10-methenyltetrahydrofolate and then the hydrolysis of 5,10-methenyltetrahydrofolate to 10-formyltetrahydrofolate. The chain is Bifunctional protein FolD from Wolbachia pipientis wMel.